Here is a 349-residue protein sequence, read N- to C-terminus: Cytoplasmic tRNA 2-thiolation protein 2 (349 aa).

The protein belongs to the CTU2/NCS2 family.

Its subcellular location is the cytoplasm. It participates in tRNA modification; 5-methoxycarbonylmethyl-2-thiouridine-tRNA biosynthesis. In terms of biological role, plays a central role in 2-thiolation of mcm(5)S(2)U at tRNA wobble positions of tRNA(Lys), tRNA(Glu) and tRNA(Gln). May act by forming a heterodimer with tut-1/ctu-1 that ligates sulfur from thiocarboxylated urm-1 onto the uridine of tRNAs at wobble position. The protein is Cytoplasmic tRNA 2-thiolation protein 2 of Caenorhabditis briggsae.